The following is a 142-amino-acid chain: Large ribosomal subunit protein uL11 (142 aa).

It belongs to the universal ribosomal protein uL11 family. In terms of assembly, part of the ribosomal stalk of the 50S ribosomal subunit. Interacts with L10 and the large rRNA to form the base of the stalk. L10 forms an elongated spine to which L12 dimers bind in a sequential fashion forming a multimeric L10(L12)X complex. In terms of processing, one or more lysine residues are methylated.

In terms of biological role, forms part of the ribosomal stalk which helps the ribosome interact with GTP-bound translation factors. This chain is Large ribosomal subunit protein uL11, found in Shewanella loihica (strain ATCC BAA-1088 / PV-4).